A 306-amino-acid polypeptide reads, in one-letter code: Ornithine carbamoyltransferase (306 aa).

Residues 53 to 56 (STRT), Gln80, Arg104, and 131 to 134 (HPCQ) each bind carbamoyl phosphate. Residues Asn162, Asp219, and 223–224 (SM) contribute to the L-ornithine site. Residues 259-260 (CL) and Arg287 contribute to the carbamoyl phosphate site.

This sequence belongs to the aspartate/ornithine carbamoyltransferase superfamily. OTCase family.

It is found in the cytoplasm. It catalyses the reaction carbamoyl phosphate + L-ornithine = L-citrulline + phosphate + H(+). It participates in amino-acid biosynthesis; L-arginine biosynthesis; L-arginine from L-ornithine and carbamoyl phosphate: step 1/3. Reversibly catalyzes the transfer of the carbamoyl group from carbamoyl phosphate (CP) to the N(epsilon) atom of ornithine (ORN) to produce L-citrulline. The polypeptide is Ornithine carbamoyltransferase (Psychrobacter sp. (strain PRwf-1)).